Here is a 227-residue protein sequence, read N- to C-terminus: Peroxisomal membrane protein 11B (227 aa).

The Cytoplasmic portion of the chain corresponds to M1 to R85. A helical membrane pass occupies residues F86–W106. At L107–P201 the chain is on the lumenal side. Residues F202–Y222 form a helical membrane-spanning segment. The Cytoplasmic segment spans residues R223 to S227.

The protein belongs to the peroxin-11 family. In terms of assembly, homooligomer. Interacts with ARC5 and FIS1B on peroxisomes. In terms of tissue distribution, expressed in roots, leaves and developing siliques.

The protein resides in the peroxisome membrane. In terms of biological role, involved in peroxisomal proliferation. Promotes peroxisomal duplication, aggregation or elongation without fission. The chain is Peroxisomal membrane protein 11B (PEX11B) from Arabidopsis thaliana (Mouse-ear cress).